Here is a 158-residue protein sequence, read N- to C-terminus: NAD(P)H-quinone oxidoreductase subunit J, chloroplastic (158 aa).

This sequence belongs to the complex I 30 kDa subunit family. In terms of assembly, NDH is composed of at least 16 different subunits, 5 of which are encoded in the nucleus.

It is found in the plastid. The protein localises to the chloroplast thylakoid membrane. The enzyme catalyses a plastoquinone + NADH + (n+1) H(+)(in) = a plastoquinol + NAD(+) + n H(+)(out). It carries out the reaction a plastoquinone + NADPH + (n+1) H(+)(in) = a plastoquinol + NADP(+) + n H(+)(out). NDH shuttles electrons from NAD(P)H:plastoquinone, via FMN and iron-sulfur (Fe-S) centers, to quinones in the photosynthetic chain and possibly in a chloroplast respiratory chain. The immediate electron acceptor for the enzyme in this species is believed to be plastoquinone. Couples the redox reaction to proton translocation, and thus conserves the redox energy in a proton gradient. The chain is NAD(P)H-quinone oxidoreductase subunit J, chloroplastic from Nasturtium officinale (Watercress).